We begin with the raw amino-acid sequence, 184 residues long: NADH-quinone oxidoreductase subunit B (184 aa).

[4Fe-4S] cluster-binding residues include C37, C38, C103, and C132. The interval 164-184 is disordered; sequence HEREEAAKHALPTHSMKGLLR.

This sequence belongs to the complex I 20 kDa subunit family. In terms of assembly, NDH-1 is composed of 14 different subunits. Subunits NuoB, C, D, E, F, and G constitute the peripheral sector of the complex. [4Fe-4S] cluster serves as cofactor.

The protein resides in the cell membrane. The catalysed reaction is a quinone + NADH + 5 H(+)(in) = a quinol + NAD(+) + 4 H(+)(out). Its function is as follows. NDH-1 shuttles electrons from NADH, via FMN and iron-sulfur (Fe-S) centers, to quinones in the respiratory chain. The immediate electron acceptor for the enzyme in this species is believed to be a menaquinone. Couples the redox reaction to proton translocation (for every two electrons transferred, four hydrogen ions are translocated across the cytoplasmic membrane), and thus conserves the redox energy in a proton gradient. In Acidothermus cellulolyticus (strain ATCC 43068 / DSM 8971 / 11B), this protein is NADH-quinone oxidoreductase subunit B.